Reading from the N-terminus, the 586-residue chain is Arginine--tRNA ligase (586 aa).

The 'HIGH' region signature appears at A131 to H141.

The protein belongs to the class-I aminoacyl-tRNA synthetase family. As to quaternary structure, monomer.

It localises to the cytoplasm. The enzyme catalyses tRNA(Arg) + L-arginine + ATP = L-arginyl-tRNA(Arg) + AMP + diphosphate. The sequence is that of Arginine--tRNA ligase from Nitrosomonas eutropha (strain DSM 101675 / C91 / Nm57).